The following is a 426-amino-acid chain: DNA polymerase processivity factor component A20 (426 aa).

This sequence belongs to the poxviruses A20 family. Interacts with the DNA polymerase catalytic subunit E9. Interacts with UDG. Component of the Uracil-DNA glycosylase(UDG)-A20-polymerase complex; A20 and UDG form a heterodimeric processivity factor that associates with E9 to form the processive polymerase holoenzyme. Interacts with D5.

Its function is as follows. Plays an essential role in viral DNA replication by acting as the polymerase processivity factor together with protein D4. May serve as a bridge which links the DNA polymerase E9 and the uracil DNA glycosylase. This chain is DNA polymerase processivity factor component A20, found in Vaccinia virus (strain Ankara) (VACV).